The sequence spans 312 residues: Light-independent protochlorophyllide reductase iron-sulfur ATP-binding protein (312 aa).

Residues 55 to 60 (GIGKST) and Lys-84 each bind ATP. Ser-59 is a binding site for Mg(2+). Positions 140 and 174 each coordinate [4Fe-4S] cluster. Residues 225-226 (NR) and 249-251 (PDL) contribute to the ATP site.

This sequence belongs to the NifH/BchL/ChlL family. In terms of assembly, homodimer. Protochlorophyllide reductase is composed of three subunits; BchL, BchN and BchB. [4Fe-4S] cluster serves as cofactor.

It catalyses the reaction chlorophyllide a + oxidized 2[4Fe-4S]-[ferredoxin] + 2 ADP + 2 phosphate = protochlorophyllide a + reduced 2[4Fe-4S]-[ferredoxin] + 2 ATP + 2 H2O. The protein operates within porphyrin-containing compound metabolism; bacteriochlorophyll biosynthesis (light-independent). Functionally, component of the dark-operative protochlorophyllide reductase (DPOR) that uses Mg-ATP and reduced ferredoxin to reduce ring D of protochlorophyllide (Pchlide) to form chlorophyllide a (Chlide). This reaction is light-independent. The L component serves as a unique electron donor to the NB-component of the complex, and binds Mg-ATP. In Rhodopseudomonas palustris (strain BisB18), this protein is Light-independent protochlorophyllide reductase iron-sulfur ATP-binding protein.